Reading from the N-terminus, the 26-residue chain is Thioredoxin H-type (26 aa).

Belongs to the thioredoxin family. Plant H-type subfamily.

It localises to the cytoplasm. Functionally, participates in various redox reactions through the reversible oxidation of the active center dithiol to a disulfide. The H form is known to activate a number of cytosolic enzymes. This chain is Thioredoxin H-type, found in Populus euphratica (Euphrates poplar).